The primary structure comprises 305 residues: UDP-3-O-acyl-N-acetylglucosamine deacetylase (305 aa).

Positions 79, 238, and 242 each coordinate Zn(2+). The active-site Proton donor is His-265.

This sequence belongs to the LpxC family. Zn(2+) is required as a cofactor.

It catalyses the reaction a UDP-3-O-[(3R)-3-hydroxyacyl]-N-acetyl-alpha-D-glucosamine + H2O = a UDP-3-O-[(3R)-3-hydroxyacyl]-alpha-D-glucosamine + acetate. It functions in the pathway glycolipid biosynthesis; lipid IV(A) biosynthesis; lipid IV(A) from (3R)-3-hydroxytetradecanoyl-[acyl-carrier-protein] and UDP-N-acetyl-alpha-D-glucosamine: step 2/6. In terms of biological role, catalyzes the hydrolysis of UDP-3-O-myristoyl-N-acetylglucosamine to form UDP-3-O-myristoylglucosamine and acetate, the committed step in lipid A biosynthesis. This Salmonella agona (strain SL483) protein is UDP-3-O-acyl-N-acetylglucosamine deacetylase.